The primary structure comprises 105 residues: DNA-binding transcriptional regulator BolA (105 aa).

This sequence belongs to the BolA/IbaG family.

Its function is as follows. Transcriptional regulator that plays an important role in general stress response. Has many effects on cell morphology, cell growth and cell division. Acts by regulating the transcription of many genes, including dacA (PBP-5), dacC (PBP-6), ampC and mreB. Probably involved in the coordination of genes that adapt the cell physiology in order to enhance cell adaptation and survival under stress conditions. Essential for normal cell morphology in stationary phase and under conditions of starvation. Also regulates a complex network of genes encoding proteins related to biofilm development, and negatively modulates flagellar biosynthesis and swimming capacity. Could be a motile/adhesive transcriptional switch, specifically involved in the transition between the planktonic and the attachment stage of biofilm formation. Overexpression produces round cell shape, impairs cell growth rate and induces biofilm development. In Escherichia coli (strain K12), this protein is DNA-binding transcriptional regulator BolA.